A 450-amino-acid polypeptide reads, in one-letter code: Serine incorporator 2 (450 aa).

Helical transmembrane passes span 5 to 27, 40 to 57, 96 to 118, 131 to 150, 160 to 182, 203 to 225, 238 to 257, 264 to 286, 315 to 337, 380 to 402, and 417 to 439; these read LGACSLLSCASCLCGSAPCILCG, LLFTSFLFLGVLVSIIML, AVYRMCFATAAFFFFFMLLMICV, GFWFFKFLILVGITVGAFYI, FYFGVVGSFLFILIQLILFVDFA, AGLFFFTFLFYLLSIAAVALMFV, VFISLNLTFCVCVSIIAVLP, PNSGLLQASVITLYTMFVTWSAL, VWWDAPSIVGLVIFILCTFFISL, TYSYSFFHFCLVLASLHVMMTLT, and WTSVWVKICASWAGLFLYLWTLV.

It belongs to the TDE1 family.

The protein localises to the cell membrane. It carries out the reaction a 1,2-diacyl-sn-glycero-3-phospho-L-serine(in) = a 1,2-diacyl-sn-glycero-3-phospho-L-serine(out). The catalysed reaction is a 1,2-diacyl-sn-glycero-3-phosphocholine(in) = a 1,2-diacyl-sn-glycero-3-phosphocholine(out). It catalyses the reaction a 1,2-diacyl-sn-glycero-3-phosphoethanolamine(in) = a 1,2-diacyl-sn-glycero-3-phosphoethanolamine(out). In terms of biological role, non-ATP-dependent, non-specific lipid transporter for phosphatidylserine, phosphatidylcholine, and phosphatidylethanolamine. Functions as a scramblase that flips lipids in both directions across the membrane. In contrast to SERINC3 and SERINC5, has no effect on gammaretrovirus particles infectivity. The polypeptide is Serine incorporator 2 (Serinc2) (Mus musculus (Mouse)).